A 448-amino-acid chain; its full sequence is Thymidine phosphorylase (448 aa).

This sequence belongs to the thymidine/pyrimidine-nucleoside phosphorylase family. Homodimer.

It catalyses the reaction thymidine + phosphate = 2-deoxy-alpha-D-ribose 1-phosphate + thymine. Its pathway is pyrimidine metabolism; dTMP biosynthesis via salvage pathway; dTMP from thymine: step 1/2. In terms of biological role, the enzymes which catalyze the reversible phosphorolysis of pyrimidine nucleosides are involved in the degradation of these compounds and in their utilization as carbon and energy sources, or in the rescue of pyrimidine bases for nucleotide synthesis. The polypeptide is Thymidine phosphorylase (Vibrio cholerae serotype O1 (strain ATCC 39315 / El Tor Inaba N16961)).